The primary structure comprises 864 residues: MSRFFARGGSDSESSSEDEQELYSDREEEEQFSDSEEESSEAESSEEESSDDEGAGASRFLKNVSESEESEDEERVTVVKSAKDKRLDELEGIIKAIENAEKINDWAVISSEFDKLNRQIVKVTQAGPTPKIYIQTVADLEDFVNETIAKQKSSNKKMNASNAKGFNAVKQRIKKNNKEYATLIEKYRADKDGFMAGGDEEPKPVISAPRISKVERVEAPVAVTATADDDGFATVGRGGKTLQYTPESILKHLRVIVESRGKKNTDRFEQIRTMEKLLEVAQNPYQRIRIYLTLISTRFDLTSSSSANYMSVDQWKLAQQEFSTLLSVLESNREYVVTEGAEEWEDDEKQPQVAAGETLHVPGSIVSYVERLDDELTRSLQQIDPHTAEYIERLSDEKELYTNLVRTQVYAEALTTSEKSDPRQDSLNRVIMRRLEHIYFKPAQVVTILEEGTWKSLPSNLASDITPRANSGEVTSLVQTLCNYLFRHSDGILRARAMLCQIYFLALHDQYYRSRDLMLMSHLTENIANFDVSTQILFNRTLVQIGLCAFRAGLVYEAQNTLSEVCGSGRQKELLAQGIILQRYSTVSPEQERLERQRQLPFHMHINLELLECIYLTSSMFLEVPLMAQTSSSPEMKRRVISKTFRRMLDYNERQVFTGPAENTRDGVIMSAKFLAAGDWKKAAEMLNSIKIWDLMPQPEKIKEMLSQQIQEEGLRTYLFTYAPFYDSVSIATLSNMFELPEKKIQAIISRMISHEELAAALDQVNNAIVFRKGVELSRLQSQIVTLADKSMNLLEANEKTLEQRTQGMANAFQRDQGAGARGGRGAGRGGQARGGPRFPGGQQGRRPGGQQFSGGALGGAIKA.

The tract at residues Met1–Thr77 is disordered. Residues Ser14–Gly54 are compositionally biased toward acidic residues. Residues Phe602 to Glu776 enclose the PCI domain. Positions Arg815 to Ala864 are disordered. The span at Gly820–Ala864 shows a compositional bias: gly residues.

It belongs to the eIF-3 subunit C family. Component of the eukaryotic translation initiation factor 3 (eIF-3) complex.

It localises to the cytoplasm. Functionally, component of the eukaryotic translation initiation factor 3 (eIF-3) complex, which is involved in protein synthesis of a specialized repertoire of mRNAs and, together with other initiation factors, stimulates binding of mRNA and methionyl-tRNAi to the 40S ribosome. The eIF-3 complex specifically targets and initiates translation of a subset of mRNAs involved in cell proliferation. This is Eukaryotic translation initiation factor 3 subunit C (nip1) from Aspergillus terreus (strain NIH 2624 / FGSC A1156).